The sequence spans 238 residues: LexA repressor (238 aa).

Positions 26 to 46 form a DNA-binding region, H-T-H motif; that stretch reads FDEMKDALELRSKSGIHRLIS. Catalysis depends on for autocatalytic cleavage activity residues S159 and K197.

This sequence belongs to the peptidase S24 family. In terms of assembly, homodimer.

It carries out the reaction Hydrolysis of Ala-|-Gly bond in repressor LexA.. Functionally, represses a number of genes involved in the response to DNA damage (SOS response), including recA and lexA. In the presence of single-stranded DNA, RecA interacts with LexA causing an autocatalytic cleavage which disrupts the DNA-binding part of LexA, leading to derepression of the SOS regulon and eventually DNA repair. In Gluconobacter oxydans (strain 621H) (Gluconobacter suboxydans), this protein is LexA repressor.